A 381-amino-acid chain; its full sequence is KRR1 small subunit processome component homolog (381 aa).

Residues 1 to 51 (MASPSLERPEKGAGKSEFRNQKPKPENQDESELLTVPDGWKEPAFSKEDNP) form a disordered region. Position 2 is an N-acetylalanine (A2). A phosphoserine mark is found at S3 and S5. Composition is skewed to basic and acidic residues over residues 7–27 (ERPE…KPEN) and 39–51 (GWKE…EDNP). K24 is covalently cross-linked (Glycyl lysine isopeptide (Lys-Gly) (interchain with G-Cter in SUMO2)). Residues 154-206 (KERFVKRRQRLIGPKGSTLKALELLTNCYIMVQGNTVSAIGPFSGLKEVRKVV) enclose the KH domain. Residues 250 to 262 (NVNKRKEPKKKTV) show a composition bias toward basic residues. 2 disordered regions span residues 250–278 (NVNK…ESQI) and 309–338 (AISK…ASTE). Glycyl lysine isopeptide (Lys-Gly) (interchain with G-Cter in SUMO2) cross-links involve residues K340 and K369.

This sequence belongs to the KRR1 family. Part of the small subunit (SSU) processome, composed of more than 70 proteins and the RNA chaperone small nucleolar RNA (snoRNA) U3. In terms of assembly, (Microbial infection) Directly interacts with HIV-1 protein VPR. Also identified in a complex with NR3C1 and HIV-1 protein VPR.

The protein resides in the nucleus. Its subcellular location is the nucleolus. It is found in the cytoplasm. In terms of biological role, part of the small subunit (SSU) processome, first precursor of the small eukaryotic ribosomal subunit. During the assembly of the SSU processome in the nucleolus, many ribosome biogenesis factors, an RNA chaperone and ribosomal proteins associate with the nascent pre-rRNA and work in concert to generate RNA folding, modifications, rearrangements and cleavage as well as targeted degradation of pre-ribosomal RNA by the RNA exosome. This chain is KRR1 small subunit processome component homolog, found in Homo sapiens (Human).